A 128-amino-acid chain; its full sequence is UPF0102 protein Mext_0406 (128 aa).

It belongs to the UPF0102 family.

The protein is UPF0102 protein Mext_0406 of Methylorubrum extorquens (strain PA1) (Methylobacterium extorquens).